Reading from the N-terminus, the 430-residue chain is Cytochrome c biogenesis protein CcsB (430 aa).

Helical transmembrane passes span 14-34 (LRLAIALLLLIAAASAVGTIL), 72-92 (SVWFLALLAWLGLALMLCSWR), and 162-182 (VGPLLVHTGLVLLLIGAAWGA).

The protein belongs to the Ccs1/CcsB family. May interact with CcsA.

It is found in the cellular thylakoid membrane. Its function is as follows. Required during biogenesis of c-type cytochromes (cytochrome c6 and cytochrome f) at the step of heme attachment. In Synechococcus sp. (strain WH7803), this protein is Cytochrome c biogenesis protein CcsB.